The primary structure comprises 513 residues: Calcium-dependent protein kinase 24 (513 aa).

The segment at 1–33 (MQPDPSGSGGDGNANAKAKLAPPPVTAAGGRPV) is disordered. Residues 47–305 (YRIGKKLGQG…AHEVLCHPWI (259 aa)) enclose the Protein kinase domain. Residues 53–61 (LGQGQFGTT) and Lys-76 each bind ATP. The active-site Proton acceptor is the Asp-171. The tract at residues 311–341 (APDKPIDSAVLSRLKHFSAMNKLKKMALRVI) is autoinhibitory domain. EF-hand domains are found at residues 348–383 (EEIGGLKELFKMIDTDDSGTITFDELKEGLKRVGSE), 384–419 (LTEHEIQALMEAADIDNSGTIDYGEFIAATLHMNKL), 420–455 (EREENLVSAFSFFDKDGSGFITIDELSQACREFGLD), and 458–489 (HLEDMIKDVDQNNDGQIDYSEFTAMMRKGNAG). Positions 361, 363, 365, 367, 372, 397, 399, 401, 403, 408, 433, 435, 437, 444, 467, 469, 471, 473, and 478 each coordinate Ca(2+).

It belongs to the protein kinase superfamily. Ser/Thr protein kinase family. CDPK subfamily. As to expression, expressed in roots.

It is found in the cytoplasm. The enzyme catalyses L-seryl-[protein] + ATP = O-phospho-L-seryl-[protein] + ADP + H(+). The catalysed reaction is L-threonyl-[protein] + ATP = O-phospho-L-threonyl-[protein] + ADP + H(+). Its activity is regulated as follows. Activated by calcium. Autophosphorylation may play an important role in the regulation of the kinase activity. In terms of biological role, may play a role in signal transduction pathways that involve calcium as a second messenger. Possesses calcium-dependent protein kinase activity in vitro. The polypeptide is Calcium-dependent protein kinase 24 (Oryza sativa subsp. japonica (Rice)).